Consider the following 227-residue polypeptide: Phosphoglycolate phosphatase (227 aa).

Asp-13 functions as the Nucleophile in the catalytic mechanism. Residues Asp-13, Asp-15, and Asp-176 each contribute to the Mg(2+) site.

Belongs to the HAD-like hydrolase superfamily. CbbY/CbbZ/Gph/YieH family. It depends on Mg(2+) as a cofactor.

The catalysed reaction is 2-phosphoglycolate + H2O = glycolate + phosphate. Its pathway is organic acid metabolism; glycolate biosynthesis; glycolate from 2-phosphoglycolate: step 1/1. In terms of biological role, specifically catalyzes the dephosphorylation of 2-phosphoglycolate. Is involved in the dissimilation of the intracellular 2-phosphoglycolate formed during the DNA repair of 3'-phosphoglycolate ends, a major class of DNA lesions induced by oxidative stress. This Nitrosospira multiformis (strain ATCC 25196 / NCIMB 11849 / C 71) protein is Phosphoglycolate phosphatase.